Here is a 310-residue protein sequence, read N- to C-terminus: Protein FIP2 (310 aa).

The disordered stretch occupies residues 1–58 (MGFAPVTPAAVETYDPDVDHDDESNGLDGFRVRSKRSGKFSGGYSDSPREVGDGYGVR). A compositionally biased stretch (acidic residues) spans 14–25 (YDPDVDHDDESN). Phosphoserine occurs at positions 77 and 105. Disordered stretches follow at residues 115-135 (ATRL…GSGG), 152-171 (FKPK…LDYD), and 177-221 (DRAE…GSSS). The segment covering 208-221 (PRNTGASNGYGSSS) has biased composition (polar residues).

In terms of assembly, interacts with FRI. Interacts with WAV3.

This Arabidopsis thaliana (Mouse-ear cress) protein is Protein FIP2.